The primary structure comprises 630 residues: MDFPTRFDVIVIGGGHAGTEAALAAARMGVKTLLLTHNVETLGQMSCNPAIGGIGKSHLVKEIDALGGAMAEATDKGGIQFRILNSRKGPAVRATRAQADRVLYKAAIRHTLENQPNLWIFQQACDDLIVEQDQVRGVVTQMGLRFHADNVVLTTGTFLGGLIHIGLENYSGGRAGDPPSIALARRLRELPLRVGRLKTGTPPRIDGRSVDFSVMTEQPGDTPIPVMSFLGSKEQHPEQVSCWITHTNARTHEIIAANLDRSPMYSGVIEGIGPRYCPSIEDKIHRFADKESHQVFLEPEGLTTHELYPNGISTSLPFDVQLQIVRSIRGMENAHIVRPGYAIEYDFFDPRDLRYSLETKVIGGLFFAGQINGTTGYEEAGAQGLLAGANAALRSQGKDSWCPRRDEAYIGVLVDDLITLGTQEPYRMFTSRAEYRLILREDNADLRLTEKGRELGLVDDRRWAAFEAKREGIEREEQRLKSTWVRPNTPQGDAIAERFGTPLTHEYNLLNLLSRPEIDYAGLVEITGDAVDNPQVAEQVEIRTKYAGYIDRQQEEIARLRASEDTRLPVDIDYLGISGLSKEIQNKLNQARPETLGQASRIPGVTPAAISLLLIHLKKRASGRQLEQSA.

Position 13 to 18 (13 to 18 (GGGHAG)) interacts with FAD. 273–287 (GPRYCPSIEDKIHRF) contributes to the NAD(+) binding site.

It belongs to the MnmG family. In terms of assembly, homodimer. Heterotetramer of two MnmE and two MnmG subunits. It depends on FAD as a cofactor.

Its subcellular location is the cytoplasm. NAD-binding protein involved in the addition of a carboxymethylaminomethyl (cmnm) group at the wobble position (U34) of certain tRNAs, forming tRNA-cmnm(5)s(2)U34. The protein is tRNA uridine 5-carboxymethylaminomethyl modification enzyme MnmG of Pseudomonas aeruginosa (strain LESB58).